Here is a 299-residue protein sequence, read N- to C-terminus: Ethylmalonyl-CoA decarboxylase (299 aa).

K209 carries the post-translational modification N6-acetyllysine; alternate. K209 bears the N6-succinyllysine; alternate mark. At K293 the chain carries N6-succinyllysine.

Belongs to the enoyl-CoA hydratase/isomerase family.

It is found in the cytoplasm. It localises to the cytosol. The enzyme catalyses (2S)-ethylmalonyl-CoA + H(+) = butanoyl-CoA + CO2. It catalyses the reaction (S)-methylmalonyl-CoA + H(+) = propanoyl-CoA + CO2. The catalysed reaction is (2R)-ethylmalonyl-CoA + H(+) = butanoyl-CoA + CO2. Its function is as follows. Decarboxylates ethylmalonyl-CoA, a potentially toxic metabolite, to form butyryl-CoA, suggesting it might be involved in metabolite proofreading. Acts preferentially on (S)-ethylmalonyl-CoA but also has some activity on the (R)-isomer. Also has methylmalonyl-CoA decarboxylase activity at lower level. The sequence is that of Ethylmalonyl-CoA decarboxylase (Echdc1) from Rattus norvegicus (Rat).